Consider the following 331-residue polypeptide: MTSFLTAARAEQEKLTPDTRRLRLFSGTSNPGLAREIAAYLGVPDGPRVCKRFADGELYVQIQESIRGCDVFLIQPTCAPVNDHLMELLIMVDACRRASARQITAVVPYYGYARADRKTAGRESITAKLTANLLVKSGVDRVLAMDLHSAQIQGYFDIPCDHIYGSPVLVDYLSTQNLDDIVVVSPDVGGVARARAFAKQMNDAPLAIIDKRRTGHNLAESLTVIGDVSGRTAILIDDMIDTGGTICAGARLLRQQGAKRVIACATHAVFSPPASERLSADGLFEQVVVTNSIPIQQERTFPQLQVLSVANMLGEAIWRIHEESSVSSMFR.

Asp55–Glu57 is a binding site for ATP. Residues His148 and Asp187 each contribute to the Mg(2+) site. Residue Lys211 is part of the active site. D-ribose 5-phosphate is bound by residues Arg213, Asp237, and Asp241–Thr245.

The protein belongs to the ribose-phosphate pyrophosphokinase family. Class I subfamily. Homohexamer. Mg(2+) serves as cofactor.

The protein resides in the cytoplasm. The catalysed reaction is D-ribose 5-phosphate + ATP = 5-phospho-alpha-D-ribose 1-diphosphate + AMP + H(+). It participates in metabolic intermediate biosynthesis; 5-phospho-alpha-D-ribose 1-diphosphate biosynthesis; 5-phospho-alpha-D-ribose 1-diphosphate from D-ribose 5-phosphate (route I): step 1/1. In terms of biological role, involved in the biosynthesis of the central metabolite phospho-alpha-D-ribosyl-1-pyrophosphate (PRPP) via the transfer of pyrophosphoryl group from ATP to 1-hydroxyl of ribose-5-phosphate (Rib-5-P). The sequence is that of Ribose-phosphate pyrophosphokinase from Parasynechococcus marenigrum (strain WH8102).